Reading from the N-terminus, the 121-residue chain is Large ribosomal subunit protein bL20 (121 aa).

This sequence belongs to the bacterial ribosomal protein bL20 family.

Binds directly to 23S ribosomal RNA and is necessary for the in vitro assembly process of the 50S ribosomal subunit. It is not involved in the protein synthesizing functions of that subunit. This is Large ribosomal subunit protein bL20 from Wolbachia sp. subsp. Brugia malayi (strain TRS).